Here is a 299-residue protein sequence, read N- to C-terminus: Tricarboxylate transport protein (299 aa).

3 Solcar repeats span residues 10–97, 109–199, and 212–297; these read VDPL…IKDM, TRGV…IKTL, and LSSG…VLVM. Transmembrane regions (helical) follow at residues 16 to 36, 66 to 86, 113 to 133, 174 to 193, 215 to 235, and 272 to 291; these read FLAG…FEFA, IGSI…KAGI, IAGL…FEAI, GVLP…LGCY, GLTF…TMPL, and GATP…FTIY.

The protein belongs to the mitochondrial carrier (TC 2.A.29) family.

It localises to the mitochondrion inner membrane. Transport of citrate across inner mitochondrial membrane. In Saccharomyces cerevisiae (strain ATCC 204508 / S288c) (Baker's yeast), this protein is Tricarboxylate transport protein (CTP1).